Consider the following 106-residue polypeptide: ATP-dependent Clp protease adapter protein ClpS (106 aa).

This sequence belongs to the ClpS family. In terms of assembly, binds to the N-terminal domain of the chaperone ClpA.

Its function is as follows. Involved in the modulation of the specificity of the ClpAP-mediated ATP-dependent protein degradation. This chain is ATP-dependent Clp protease adapter protein ClpS, found in Escherichia coli O139:H28 (strain E24377A / ETEC).